The chain runs to 158 residues: U-limacoditoxin(8)-Dv66 (158 aa).

A signal peptide spans 1 to 24 (MALRAPWIALCCVLAVLFVVPAAT). A propeptide spanning residues 25 to 32 (RDEERQKR) is cleaved from the precursor. A run of 2 repeats spans residues 33 to 78 (GVDF…RQKR) and 79 to 124 (GVDF…RQKR). Residues 33–158 (GVDFGLQRGF…AQDPHGPGRK (126 aa)) form a 3 X 46 AA tandem repeats region. Pro-63 carries the post-translational modification Proline amide. Positions 64-78 (GRKRRDAYEMERQKR) are excised as a propeptide. The segment at 101-120 (ARAQDPHGPGRKRRDAYEME) is disordered. Proline amide is present on Pro-109. Positions 110–124 (GRKRRDAYEMERQKR) are excised as a propeptide. A 3; half-length repeat occupies 125 to 158 (GVDFGLQRGFSGSELAKLKLALARAQDPHGPGRK). Pro-155 bears the Proline amide mark.

This sequence belongs to the diuretic hormone class 2 family. As to expression, expressed by the venom secretory cell of the spine. The spine is a cuticular structure containing a single large nucleated venom-secreting cell at its base. It is an independent unit capable of producing, storing and injecting venom. On the back of D.vulnerans caterpillars, spines are grouped together by 50 to 100 to form scoli, of which there are eight in D.vulnerans.

It is found in the secreted. Its function is as follows. Probable toxin. Does not show insecticidal, antimicrobial and antiparasitic activities. Does not induce increase in intracellular calcium in mouse DRG neurons, suggesting that it does not induce pain. In Doratifera vulnerans (Mottled cup moth), this protein is U-limacoditoxin(8)-Dv66.